Reading from the N-terminus, the 174-residue chain is 5-hydroxymethyl-dUMP N-hydrolase (174 aa).

Position 2 is an N-acetylalanine (A2). G27 lines the 5-hydroxymethyl-dUMP pocket. At S28 the chain carries Phosphoserine. Residues I29, R30, G31, S98, G100, and E104 each contribute to the 5-hydroxymethyl-dUMP site. S98 is subject to Phosphoserine. Phosphoserine is present on residues S123, S128, S138, and S169. S128 contacts 5-hydroxymethyl-dUMP.

This sequence belongs to the 2'-deoxynucleoside 5'-phosphate N-hydrolase 1 family. As to quaternary structure, monomer and homodimer. As to expression, expressed at low levels in brain, colon, lung, peripheral blood leukocytes, placenta, small intestine, and thymus. Expressed at high levels in heart, kidney, liver, skeletal muscle and spleen. Overexpressed in a significant proportion of breast cancers.

The protein resides in the cytoplasm. It localises to the nucleus. The enzyme catalyses 5-hydroxymethyl-dUMP + H2O = 5-hydroxymethyluracil + 2-deoxy-D-ribose 5-phosphate. Inhibited by AMP and GMP. In terms of biological role, part of a nucleotide salvage pathway that eliminates epigenetically modified 5-hydroxymethyl-dCMP (hmdCMP) in a two-step process entailing deamination to cytotoxic 5-hydroxymethyl-dUMP (hmdUMP), followed by its hydrolysis into 5-hydroxymethyluracil (hmU) and 2-deoxy-D-ribose 5-phosphate (deoxyribosephosphate). Catalyzes the second step in that pathway, the hydrolysis of the N-glycosidic bond in hmdUMP, degrading this cytotoxic nucleotide to avoid its genomic integration. This is 5-hydroxymethyl-dUMP N-hydrolase from Homo sapiens (Human).